Reading from the N-terminus, the 718-residue chain is Mitotic spindle assembly checkpoint protein MAD1 (718 aa).

An N-acetylmethionine modification is found at M1. At S16 the chain carries Phosphoserine. A coiled-coil region spans residues Q46 to A632. The residue at position 61 (K61) is an N6-acetyllysine; alternate. K61 participates in a covalent cross-link: Glycyl lysine isopeptide (Lys-Gly) (interchain with G-Cter in SUMO2); alternate. Positions K79 to R82 match the Nuclear localization signal motif. At S214 the chain carries Phosphoserine. The interval V301 to E340 is important for interaction with IK. The tract at residues L380 to Q532 is necessary for interaction with NEK2. S428 carries the phosphoserine modification. An important for interaction with IK region spans residues E439–L480. Positions T540–S551 are necessary for interaction with MAD2L1. 2 positions are modified to phosphoserine: S598 and S610. A Phosphotyrosine modification is found at Y634. A Phosphothreonine modification is found at T716.

This sequence belongs to the MAD1 family. Homodimer. Dimerizes via its N- and C- terminal regions. Heterodimerizes with MAD2L1 in order to form a tetrameric MAD1L1-MAD2L1 core complex. Interacts with the closed conformation form of MAD2L1 (C-MAD2) and open conformation form of MAD2L1 (O-MAD2). It is unclear whether MAD1L1 dimerization promotes the conversion of closed to open conformation of MAD2L1. Formation of a heterotetrameric core complex containing two molecules each of MAD1L1 and of MAD2L1 promotes binding of another molecule of MAD2L1 to each MAD2L1, resulting in a heterohexamer. Perturbation of the original MAD1L1-MAD2L1 structure by the spindle checkpoint may decrease MAD2L1 affinity for MAD1L1. CDC20 can compete with MAD1L1 for MAD2L1 binding, until the attachment and/or tension dampen the checkpoint signal, preventing further release of MAD2L1 on to CDC20. Also able to interact with the BUB1/BUB3 complex. Interacts with NEK2. Interacts with TTK. Interacts with TPR; the interactions occurs in a microtubule-independent manner. Interacts with IK. Interacts with the viral Tax protein. Interacts with PRAP1. In terms of assembly, interacts with MAD2L1; this interaction leads to the cytoplasmic sequestration of MAD2L1. Interacts with PRAP1. Phosphorylated; by BUB1. Become hyperphosphorylated in late S through M phases or after mitotic spindle damage. Phosphorylated; by TTK. Expressed in hepatocellular carcinomas and hepatoma cell lines (at protein level).

Its subcellular location is the nucleus. The protein localises to the chromosome. The protein resides in the centromere. It is found in the kinetochore. It localises to the nucleus envelope. Its subcellular location is the cytoplasm. The protein localises to the cytoskeleton. The protein resides in the microtubule organizing center. It is found in the centrosome. It localises to the spindle. Its subcellular location is the spindle pole. Functionally, component of the spindle-assembly checkpoint that prevents the onset of anaphase until all chromosomes are properly aligned at the metaphase plate. Forms a heterotetrameric complex with the closed conformation form of MAD2L1 (C-MAD2) at unattached kinetochores during prometaphase, recruits an open conformation of MAD2L1 (O-MAD2) and promotes the conversion of O-MAD2 to C-MAD2, which ensures mitotic checkpoint signaling. In terms of biological role, sequesters MAD2L1 in the cytoplasm preventing its function as an activator of the mitotic spindle assembly checkpoint (SAC) resulting in SAC impairment and chromosomal instability in hepatocellular carcinomas. This Homo sapiens (Human) protein is Mitotic spindle assembly checkpoint protein MAD1 (MAD1L1).